The sequence spans 447 residues: ATP-dependent protease ATPase subunit HslU (447 aa).

Residues I18, 60–65, D259, E325, and R397 contribute to the ATP site; that span reads GVGKTE.

Belongs to the ClpX chaperone family. HslU subfamily. As to quaternary structure, a double ring-shaped homohexamer of HslV is capped on each side by a ring-shaped HslU homohexamer. The assembly of the HslU/HslV complex is dependent on binding of ATP.

It localises to the cytoplasm. Its function is as follows. ATPase subunit of a proteasome-like degradation complex; this subunit has chaperone activity. The binding of ATP and its subsequent hydrolysis by HslU are essential for unfolding of protein substrates subsequently hydrolyzed by HslV. HslU recognizes the N-terminal part of its protein substrates and unfolds these before they are guided to HslV for hydrolysis. In Burkholderia thailandensis (strain ATCC 700388 / DSM 13276 / CCUG 48851 / CIP 106301 / E264), this protein is ATP-dependent protease ATPase subunit HslU.